The following is a 709-amino-acid chain: ATP-binding cassette sub-family F member 3 (709 aa).

At alanine 2 the chain carries N-acetylalanine. Phosphoserine is present on serine 83. The span at 129–143 (RLKAKQEKRSEKDTL) shows a compositional bias: basic and acidic residues. The interval 129-171 (RLKAKQEKRSEKDTLKTSNPLVLEEASASQAGSRKESRLESSG) is disordered. Serine 155, serine 157, and serine 161 each carry phosphoserine. The segment covering 161-171 (SRKESRLESSG) has biased composition (basic and acidic residues). ABC transporter domains lie at 178 to 424 (VRIE…LNQQ) and 492 to 707 (LQLD…RREG). 210–217 (GRNGLGKT) contributes to the ATP binding site. Serine 283 is subject to Phosphoserine. 525 to 532 (GENGAGKS) provides a ligand contact to ATP.

This sequence belongs to the ABC transporter superfamily. ABCF family. EF3 subfamily.

Functionally, displays an antiviral effect against flaviviruses such as west Nile virus (WNV) in the presence of OAS1B. The protein is ATP-binding cassette sub-family F member 3 (ABCF3) of Homo sapiens (Human).